The following is a 373-amino-acid chain: Glutamine synthetase (373 aa).

N-acetylalanine is present on A2. The interval 2–25 is required for glutamine-induced ubiquitination by CRL4(CRBN) and proteasomal degradation; that stretch reads ATSASSHLNKGIKQMYMSLPQGEK. An N6-acetyllysine mark is found at K11 and K14. One can recognise a GS beta-grasp domain in the interval 24–106; the sequence is EKVQAMYIWV…VLCEVFKYNR (83 aa). Y104 carries the phosphotyrosine modification. The GS catalytic domain occupies 113–373; the sequence is LRHICKRIMD…TGDEPFQYKN (261 aa). ATP is bound at residue E134. 4 residues coordinate Mn(2+): E134, E136, E196, and E203. 203-208 is a binding site for ATP; it reads EFQIGP. 246–247 is an L-glutamate binding site; that stretch reads NW. A Mn(2+)-binding site is contributed by H253. ATP-binding positions include 255 to 257, R319, and R324; that span reads NFS. Position 319 (R319) interacts with L-glutamate. 336 to 338 is a binding site for ADP; sequence YFE. E338 contributes to the Mn(2+) binding site. An L-glutamate-binding site is contributed by R340. S343 carries the phosphoserine modification.

Belongs to the glutamine synthetase family. In terms of assembly, decamer; composed of two pentamers. Interacts with PALMD. Interacts with RHOJ. Interacts with BEST2; this interaction tethers a fraction of GLUL to the membrane, causing a decrease of cytosolic glutamine synthase (GS) activity and inhibits the chloride channel activity of BEST2 by affecting the gating at the aperture in the absence of intracellular glutamate. It depends on Mg(2+) as a cofactor. The cofactor is Mn(2+). In terms of processing, acetylated by EP300/p300; acetylation is stimulated by increased glutamine levels and promotes ubiquitin-mediated proteasomal degradation. Palmitoylated; undergoes autopalmitoylation. Post-translationally, ubiquitinated by ZNRF1. Ubiquitinated by the DCX (DDB1-CUL4-X-box) E3 ubiquitin-protein ligase complex called CRL4(CRBN), leading to proteasomal degradation. As to expression, expressed in microvascular endothelial cells.

It is found in the cytoplasm. It localises to the cytosol. The protein resides in the microsome. Its subcellular location is the mitochondrion. The protein localises to the cell membrane. It catalyses the reaction L-glutamate + NH4(+) + ATP = L-glutamine + ADP + phosphate + H(+). It carries out the reaction L-cysteinyl-[protein] + hexadecanoyl-CoA = S-hexadecanoyl-L-cysteinyl-[protein] + CoA. Its activity is regulated as follows. Glutamine synthetase activity is inhibited by methionine sulfoximine (MSO). Functionally, glutamine synthetase that catalyzes the ATP-dependent conversion of glutamate and ammonia to glutamine. Its role depends on tissue localization: in the brain, it regulates the levels of toxic ammonia and converts neurotoxic glutamate to harmless glutamine, whereas in the liver, it is one of the enzymes responsible for the removal of ammonia. Plays a key role in ammonium detoxification during erythropoiesis: the glutamine synthetase activity is required to remove ammonium generated by porphobilinogen deaminase (HMBS) during heme biosynthesis to prevent ammonium accumulation and oxidative stress. Essential for proliferation of fetal skin fibroblasts. Independently of its glutamine synthetase activity, required for endothelial cell migration during vascular development. Involved in angiogenesis by regulating membrane localization and activation of the GTPase RHOJ, possibly by promoting RHOJ palmitoylation. May act as a palmitoyltransferase for RHOJ: able to autopalmitoylate and then transfer the palmitoyl group to RHOJ. Plays a role in ribosomal 40S subunit biogenesis. Through the interaction with BEST2, inhibits BEST2 channel activity by affecting the gating at the aperture in the absence of intracellular L-glutamate, but sensitizes BEST2 to intracellular L-glutamate, which promotes the opening of BEST2 and thus relieves its inhibitory effect on BEST2. The polypeptide is Glutamine synthetase (Mus musculus (Mouse)).